Consider the following 90-residue polypeptide: UPF0213 protein Reut_B5558 (90 aa).

Residues 5 to 80 (RQWYLYLLEC…KRMSSAQKIA (76 aa)) enclose the GIY-YIG domain.

This sequence belongs to the UPF0213 family.

This is UPF0213 protein Reut_B5558 from Cupriavidus pinatubonensis (strain JMP 134 / LMG 1197) (Cupriavidus necator (strain JMP 134)).